The primary structure comprises 345 residues: S-adenosylmethionine:tRNA ribosyltransferase-isomerase (345 aa).

This sequence belongs to the QueA family. Monomer.

The protein localises to the cytoplasm. It catalyses the reaction 7-aminomethyl-7-carbaguanosine(34) in tRNA + S-adenosyl-L-methionine = epoxyqueuosine(34) in tRNA + adenine + L-methionine + 2 H(+). The protein operates within tRNA modification; tRNA-queuosine biosynthesis. In terms of biological role, transfers and isomerizes the ribose moiety from AdoMet to the 7-aminomethyl group of 7-deazaguanine (preQ1-tRNA) to give epoxyqueuosine (oQ-tRNA). This chain is S-adenosylmethionine:tRNA ribosyltransferase-isomerase, found in Helicobacter pylori (strain P12).